Reading from the N-terminus, the 250-residue chain is MSKEKQAQSKAHKAQQAISSAKSLSTQKSKMSELERATRDGAAIGKKRADIAKKIADKAKQLSSYQAKQFKADEQAVKKVAQEQKRLSDERTKHEAFIKQSLSSMRTTASATMEAEEEYDFFISHASEDKEAFVQDLAAALRDLGAKIFYDAYTLKVGDSLRRKIDQGLANSKFGIVVLSEHFFSKQWPARELDGLTAMEIGGQTRILPIWHKVSYDEVRRFSPSLADKVALNTSLKSVEEIAKELHSLI.

The disordered stretch occupies residues 1 to 46; sequence MSKEKQAQSKAHKAQQAISSAKSLSTQKSKMSELERATRDGAAIGK. The segment covering 14-23 has biased composition (low complexity); that stretch reads AQQAISSAKS. Residues 30–39 show a composition bias toward basic and acidic residues; sequence KMSELERATR. The TIR domain occupies 117-250; the sequence is EEYDFFISHA…EIAKELHSLI (134 aa). Glu-192 is an active-site residue.

In terms of assembly, homodimer. Interacts with host TIRAP. Interacts with host TLR4, abolishes the interaction of host TIRAP with TLR4.

It is found in the secreted. The protein localises to the host cell membrane. It catalyses the reaction NAD(+) + H2O = ADP-D-ribose + nicotinamide + H(+). It carries out the reaction NAD(+) = 2'cADPR + nicotinamide + H(+). Functionally, virulence factor that interferes with host Toll-like receptor 2 (TLR2) signaling, resulting in the reduction of dendritic cell maturation, inhibition of pro-inflammatory cytokine secretion and impaired NF-kappa-B activation in macrophages. Also acts on host TLR4. Binds host lipids. Has NAD(+) hydrolase (NADase) activity, catalyzes cleavage of NAD(+) into ADP-D-ribose (ADPR) and nicotinamide, also generates a cyclization variant of cyclic ADPR (cADPR), termed v-cADPR (probably 2'cADPR). The chain is Probable 2' cyclic ADP-D-ribose synthase TcpB from Brucella abortus (strain 2308).